The sequence spans 205 residues: Large ribosomal subunit protein uL3c (205 aa).

Residues 129–154 are disordered; it reads SRGPMSHGSKNHRQPGSIGAGTTPGR.

Belongs to the universal ribosomal protein uL3 family. Part of the 50S ribosomal subunit.

It is found in the plastid. The protein resides in the chloroplast. Functionally, one of the primary rRNA binding proteins, it binds directly near the 3'-end of the 23S rRNA, where it nucleates assembly of the 50S subunit. The sequence is that of Large ribosomal subunit protein uL3c (rpl3) from Pyropia yezoensis (Susabi-nori).